We begin with the raw amino-acid sequence, 359 residues long: S-geranylgeranyl-glutathione receptor P2RY8 (359 aa).

Residues 1 to 19 (MQVPNSTGPDNATLQMLRN) lie on the Extracellular side of the membrane. N-linked (GlcNAc...) asparagine glycans are attached at residues N5 and N11. A helical transmembrane segment spans residues 20-40 (PAIAVALPVVYSLVAAVSIPG). Topologically, residues 41-57 (NLFSLWVLCRRMGPRSP) are cytoplasmic. Residues 58–78 (SVIFMINLSVTDLMLASVLPF) form a helical membrane-spanning segment. Topologically, residues 79–88 (QIYYHCNRHH) are extracellular. A helical transmembrane segment spans residues 89–109 (WVFGVLLCNVVTVAFYANMYS). The Cytoplasmic portion of the chain corresponds to 110–138 (SILTMTCISVERFLGVLYPLSSKRWRRRR). The helical transmembrane segment at 139–159 (YAVAACAGTWLLLLTALSPLA) threads the bilayer. At 160-187 (RTDLTYPVHALGIITCFDVLKWTMLPSV) the chain is on the extracellular side. Residues 188 to 208 (AMWAVFLFTIFILLFLIPFVI) form a helical membrane-spanning segment. Residues 209–237 (TVACYTATILKLLRTEEAHGREQRRRAVG) are Cytoplasmic-facing. The helical transmembrane segment at 238 to 258 (LAAVVLLAFVTCFAPNNFVLL) threads the bilayer. Topologically, residues 259 to 275 (AHIVSRLFYGKSYYHVY) are extracellular. A helical transmembrane segment spans residues 276 to 296 (KLTLCLSCLNNCLDPFVYYFA). The Cytoplasmic portion of the chain corresponds to 297-359 (SREFQLRLRE…PGLQRQESVF (63 aa)). Residues 329–359 (RTTSVRSEAGAHPEGMEGATRPGLQRQESVF) form a disordered region.

It belongs to the G-protein coupled receptor 1 family. In terms of tissue distribution, barely detectable in normal blood leukocytes. Weaker expression was seen in heart, kidney and lung. Not detected in brain. Expressed in B cells and follicular helper T cells in germinal centers (at protein level).

It is found in the cell membrane. Functionally, g protein-coupled receptor for S-geranylgeranyl-glutathione (GGG), an endogenous metabolite present in lymphoid tissues. Couples the binding of GGG to the activation of GNA13 and downstream repression of AKT activation in lymphocytes defining their positioning and growth within lymphoid organs. In lymphoid follicles, confines B cells and follicular helper T cells in germinal centers (GCs) in response to GGG local gradients established by GGT5 (via GGG catabolism) and ABCC1 (via extracellular transport) with lower concentrations of GGG found in the follicular dendritic cell network region around which germinal centers are formed. In the bone marrow, also in response to GGG gradients established by GGT5 and ABCC1, it restricts chemotactic transmigration of B cells, T cells and NK cells from blood vessels to the bone marrow parenchyma. Contributes to GNA13-dependent pathway that suppresses GC B cell growth. In Homo sapiens (Human), this protein is S-geranylgeranyl-glutathione receptor P2RY8.